Reading from the N-terminus, the 345-residue chain is NADPH-dependent curcumin reductase (345 aa).

A compositionally biased stretch (basic residues) spans 1-10 (MGQQKQRNRR). Residues 1–24 (MGQQKQRNRRWVLASRPHGAPVPE) are disordered. NADP(+) contacts are provided by Lys-186, Asn-225, and Asn-333.

As to quaternary structure, homodimer.

The catalysed reaction is tetrahydrocurcumin + 2 NADP(+) = curcumin + 2 NADPH + 2 H(+). It carries out the reaction tetrahydrocurcumin + NADP(+) = dihydrocurcumin + NADPH + H(+). The enzyme catalyses dihydrocurcumin + NADP(+) = curcumin + NADPH + H(+). With respect to regulation, inhibited by thiol-specific reagents (p-chloromercuribenzoate and 5,5'-dithio-bis-2-nitrobenzoate). Its function is as follows. Catalyzes the metal-independent reduction of curcumin to dihydrocurcumin (DHC) as an intermediate product, followed by further reduction to tetrahydrocurcumin (THC) as an end product. It also acts on 3-octene-2-one, 3-hepten-2-one, resveratrol, and trans-2-octenal. The sequence is that of NADPH-dependent curcumin reductase from Escherichia coli (strain K12).